A 244-amino-acid polypeptide reads, in one-letter code: Small ribosomal subunit protein uS2 (244 aa).

Belongs to the universal ribosomal protein uS2 family.

The polypeptide is Small ribosomal subunit protein uS2 (Exiguobacterium sibiricum (strain DSM 17290 / CCUG 55495 / CIP 109462 / JCM 13490 / 255-15)).